We begin with the raw amino-acid sequence, 693 residues long: Golgin subfamily A member 6A (693 aa).

Positions 14–611 (LEESRQNKLA…KLLELQELVL (598 aa)) form a coiled coil. 3 disordered regions span residues 20–69 (NKLA…PGDS), 497–547 (LPGE…GTEQ), and 661–693 (NVEP…MQDT). Positions 54–69 (SPETTTSGGCHSPGDS) are enriched in polar residues. Positions 537-547 (LPKEKADGTEQ) are enriched in basic and acidic residues. Residues 676 to 693 (DNPTVQQIVQLSPVMQDT) show a composition bias toward polar residues.

It belongs to the GOLGA6 family. As to expression, highly expressed in seminiferous tubes in testis. Highly expressed in spermatids, barely detectable in late pachytene spermatocytes, and not detectable in spermatogonia. Detected at intermediate levels in pancreas and lymph nodes, and at much lower levels in spleen, peripheral blood leukocytes, skeletal muscle, liver, lung, placenta, brain and heart.

This is Golgin subfamily A member 6A (GOLGA6A) from Homo sapiens (Human).